The primary structure comprises 560 residues: Putative transport protein VSAL_I2029 (560 aa).

The next 5 membrane-spanning stretches (helical) occupy residues 14–34, 37–57, 66–86, 94–114, and 161–181; these read ILLL…KIGS, LGSS…GYTF, FMLF…GIFL, LLVL…GYYF, and NLSV…ILLA. RCK C-terminal domains follow at residues 203–292 and 293–376; these read RGIG…FRNG and KEVF…KIGF. A run of 5 helical transmembrane segments spans residues 386 to 406, 409 to 429, 451 to 471, 478 to 498, and 539 to 559; these read LLAF…TMSF, VTFG…LGFL, GLLV…IEYF, VLAA…LVGA, and AGTY…MILL.

Belongs to the AAE transporter (TC 2.A.81) family. YbjL subfamily.

It localises to the cell membrane. This chain is Putative transport protein VSAL_I2029, found in Aliivibrio salmonicida (strain LFI1238) (Vibrio salmonicida (strain LFI1238)).